Here is a 471-residue protein sequence, read N- to C-terminus: Bifunctional protein GlmU (471 aa).

The tract at residues 1–235 is pyrophosphorylase; that stretch reads MVAVAILAAG…YQEIFGINNR (235 aa). UDP-N-acetyl-alpha-D-glucosamine is bound by residues 7 to 10, lysine 21, glutamine 82, and 87 to 88; these read LAAG and GT. Aspartate 112 lines the Mg(2+) pocket. Residues glycine 149, glutamate 164, asparagine 179, and asparagine 233 each coordinate UDP-N-acetyl-alpha-D-glucosamine. Asparagine 233 is a binding site for Mg(2+). The segment at 236 to 256 is linker; the sequence is KHLAKAHEILQVRVKDDWMEA. The tract at residues 257–471 is N-acetyltransferase; the sequence is GVTLIDPDSI…SKKEENKSSP (215 aa). Residues arginine 338 and lysine 356 each coordinate UDP-N-acetyl-alpha-D-glucosamine. The active-site Proton acceptor is histidine 368. 2 residues coordinate UDP-N-acetyl-alpha-D-glucosamine: tyrosine 371 and asparagine 382. Acetyl-CoA-binding positions include alanine 385, 391–392, serine 410, alanine 428, and arginine 445; that span reads NY.

It in the N-terminal section; belongs to the N-acetylglucosamine-1-phosphate uridyltransferase family. In the C-terminal section; belongs to the transferase hexapeptide repeat family. In terms of assembly, homotrimer. Mg(2+) is required as a cofactor.

The protein localises to the cytoplasm. The catalysed reaction is alpha-D-glucosamine 1-phosphate + acetyl-CoA = N-acetyl-alpha-D-glucosamine 1-phosphate + CoA + H(+). It catalyses the reaction N-acetyl-alpha-D-glucosamine 1-phosphate + UTP + H(+) = UDP-N-acetyl-alpha-D-glucosamine + diphosphate. The protein operates within nucleotide-sugar biosynthesis; UDP-N-acetyl-alpha-D-glucosamine biosynthesis; N-acetyl-alpha-D-glucosamine 1-phosphate from alpha-D-glucosamine 6-phosphate (route II): step 2/2. It participates in nucleotide-sugar biosynthesis; UDP-N-acetyl-alpha-D-glucosamine biosynthesis; UDP-N-acetyl-alpha-D-glucosamine from N-acetyl-alpha-D-glucosamine 1-phosphate: step 1/1. Its pathway is bacterial outer membrane biogenesis; LPS lipid A biosynthesis. In terms of biological role, catalyzes the last two sequential reactions in the de novo biosynthetic pathway for UDP-N-acetylglucosamine (UDP-GlcNAc). The C-terminal domain catalyzes the transfer of acetyl group from acetyl coenzyme A to glucosamine-1-phosphate (GlcN-1-P) to produce N-acetylglucosamine-1-phosphate (GlcNAc-1-P), which is converted into UDP-GlcNAc by the transfer of uridine 5-monophosphate (from uridine 5-triphosphate), a reaction catalyzed by the N-terminal domain. The polypeptide is Bifunctional protein GlmU (Trichodesmium erythraeum (strain IMS101)).